The primary structure comprises 181 residues: Putative J domain-containing protein R266 (181 aa).

Positions 6–70 (NYYQILDVDN…LKRLNYDSYL (65 aa)) constitute a J domain.

This chain is Putative J domain-containing protein R266, found in Acanthamoeba polyphaga (Amoeba).